The chain runs to 153 residues: Arginine repressor (153 aa).

Belongs to the ArgR family.

It localises to the cytoplasm. Its pathway is amino-acid biosynthesis; L-arginine biosynthesis [regulation]. Its function is as follows. Regulates arginine biosynthesis genes. The chain is Arginine repressor from Actinobacillus pleuropneumoniae serotype 3 (strain JL03).